The primary structure comprises 260 residues: Alpha-acetolactate decarboxylase (260 aa).

It belongs to the alpha-acetolactate decarboxylase family.

The enzyme catalyses (2S)-2-acetolactate + H(+) = (R)-acetoin + CO2. It participates in polyol metabolism; (R,R)-butane-2,3-diol biosynthesis; (R,R)-butane-2,3-diol from pyruvate: step 2/3. In terms of biological role, converts acetolactate into acetoin, which can be excreted by the cells. This may be a mechanism for controlling the internal pH of cells in the stationary stage. The polypeptide is Alpha-acetolactate decarboxylase (budA) (Klebsiella aerogenes (Enterobacter aerogenes)).